We begin with the raw amino-acid sequence, 75 residues long: Small ribosomal subunit protein bS18 (75 aa).

The protein belongs to the bacterial ribosomal protein bS18 family. Part of the 30S ribosomal subunit. Forms a tight heterodimer with protein bS6.

In terms of biological role, binds as a heterodimer with protein bS6 to the central domain of the 16S rRNA, where it helps stabilize the platform of the 30S subunit. The polypeptide is Small ribosomal subunit protein bS18 (Hydrogenovibrio crunogenus (strain DSM 25203 / XCL-2) (Thiomicrospira crunogena)).